A 903-amino-acid polypeptide reads, in one-letter code: Protein translocase subunit SecA (903 aa).

ATP-binding positions include glutamine 87, 105 to 109, and aspartate 512; that span reads GEGKT. The segment at 853–903 is disordered; sequence KQQQLSHYEENALVTEDPNAPATAERKVGRNDPCPCGSGKKYKQCHGRLQS. Positions 886, 888, 897, and 898 each coordinate Zn(2+). The segment covering 892–903 has biased composition (basic residues); that stretch reads KKYKQCHGRLQS.

It belongs to the SecA family. In terms of assembly, monomer and homodimer. Part of the essential Sec protein translocation apparatus which comprises SecA, SecYEG and auxiliary proteins SecDF-YajC and YidC. Zn(2+) serves as cofactor.

It localises to the cell inner membrane. Its subcellular location is the cytoplasm. The enzyme catalyses ATP + H2O + cellular proteinSide 1 = ADP + phosphate + cellular proteinSide 2.. Part of the Sec protein translocase complex. Interacts with the SecYEG preprotein conducting channel. Has a central role in coupling the hydrolysis of ATP to the transfer of proteins into and across the cell membrane, serving both as a receptor for the preprotein-SecB complex and as an ATP-driven molecular motor driving the stepwise translocation of polypeptide chains across the membrane. This is Protein translocase subunit SecA from Serratia proteamaculans (strain 568).